Here is a 265-residue protein sequence, read N- to C-terminus: GTP cyclohydrolase FolE2 (265 aa).

It belongs to the GTP cyclohydrolase IV family.

The catalysed reaction is GTP + H2O = 7,8-dihydroneopterin 3'-triphosphate + formate + H(+). It participates in cofactor biosynthesis; 7,8-dihydroneopterin triphosphate biosynthesis; 7,8-dihydroneopterin triphosphate from GTP: step 1/1. Its function is as follows. Converts GTP to 7,8-dihydroneopterin triphosphate. This Bordetella avium (strain 197N) protein is GTP cyclohydrolase FolE2.